The following is a 359-amino-acid chain: Carbamoyl phosphate synthase small chain (359 aa).

A CPSase region spans residues 1–169 (MTKRILVLED…TKTSYPAPGV (169 aa)). Ser46, Gly220, and Gly222 together coordinate L-glutamine. In terms of domain architecture, Glutamine amidotransferase type-1 spans 172-358 (SVVLVDFGLK…IEMMEVFKQS (187 aa)). The active-site Nucleophile is Cys247. Positions 248, 251, 289, 291, and 292 each coordinate L-glutamine. Catalysis depends on residues His331 and Asp333.

The protein belongs to the CarA family. In terms of assembly, composed of two chains; the small (or glutamine) chain promotes the hydrolysis of glutamine to ammonia, which is used by the large (or ammonia) chain to synthesize carbamoyl phosphate. Tetramer of heterodimers (alpha,beta)4.

It carries out the reaction hydrogencarbonate + L-glutamine + 2 ATP + H2O = carbamoyl phosphate + L-glutamate + 2 ADP + phosphate + 2 H(+). It catalyses the reaction L-glutamine + H2O = L-glutamate + NH4(+). The protein operates within amino-acid biosynthesis; L-arginine biosynthesis; carbamoyl phosphate from bicarbonate: step 1/1. It participates in pyrimidine metabolism; UMP biosynthesis via de novo pathway; (S)-dihydroorotate from bicarbonate: step 1/3. Small subunit of the glutamine-dependent carbamoyl phosphate synthetase (CPSase). CPSase catalyzes the formation of carbamoyl phosphate from the ammonia moiety of glutamine, carbonate, and phosphate donated by ATP, constituting the first step of 2 biosynthetic pathways, one leading to arginine and/or urea and the other to pyrimidine nucleotides. The small subunit (glutamine amidotransferase) binds and cleaves glutamine to supply the large subunit with the substrate ammonia. The sequence is that of Carbamoyl phosphate synthase small chain from Streptococcus pneumoniae (strain ATCC BAA-255 / R6).